We begin with the raw amino-acid sequence, 134 residues long: Translation initiation factor 2 subunit beta (134 aa).

It belongs to the eIF-2-beta/eIF-5 family. Heterotrimer composed of an alpha, a beta and a gamma chain.

EIF-2 functions in the early steps of protein synthesis by forming a ternary complex with GTP and initiator tRNA. This Pyrobaculum calidifontis (strain DSM 21063 / JCM 11548 / VA1) protein is Translation initiation factor 2 subunit beta.